The sequence spans 455 residues: Ectonucleoside triphosphate diphosphohydrolase 6 (455 aa).

The Cytoplasmic portion of the chain corresponds to 1 to 12; that stretch reads MRKIPNHGTLRM. A helical; Signal-anchor for type II membrane protein membrane pass occupies residues 13–32; the sequence is TKVAYPLGLCVGLFIYVAYI. Residues 33–455 lie on the Lumenal side of the membrane; sequence KWHRASAAQA…SLKRQKVPAL (423 aa). Asparagine 192 carries an N-linked (GlcNAc...) asparagine glycan. The active-site Proton acceptor is glutamate 196. An N-linked (GlcNAc...) asparagine glycan is attached at asparagine 256. 2 disulfide bridges follow: cysteine 297–cysteine 327 and cysteine 387–cysteine 401.

This sequence belongs to the GDA1/CD39 NTPase family. Requires Ca(2+) as cofactor. It depends on Mg(2+) as a cofactor. In terms of processing, might be cleaved at the N-terminus, retained in an intracellular membrane compartment and in addition be released into the extracellular medium. N-glycosylated. In terms of tissue distribution, expressed in heart and brain.

It localises to the golgi apparatus membrane. It is found in the secreted. The protein resides in the cell membrane. It catalyses the reaction a ribonucleoside 5'-diphosphate + H2O = a ribonucleoside 5'-phosphate + phosphate + H(+). The catalysed reaction is IDP + H2O = IMP + phosphate + H(+). The enzyme catalyses GDP + H2O = GMP + phosphate + H(+). It carries out the reaction UDP + H2O = UMP + phosphate + H(+). In terms of biological role, catalyzes the hydrolysis of nucleoside triphosphates and diphosphates in a calcium- or magnesium-dependent manner. Has a strong preference for nucleoside diphosphates, preferentially hydrolyzes GDP, IDP, and UDP, with slower hydrolysis of CDP, ITP, GTP, CTP, ADP, and UTP and virtually no hydrolysis of ATP. The membrane bound form might support glycosylation reactions in the Golgi apparatus and, when released from cells, might catalyze the hydrolysis of extracellular nucleotides. This is Ectonucleoside triphosphate diphosphohydrolase 6 (Entpd6) from Rattus norvegicus (Rat).